The chain runs to 200 residues: 3-isopropylmalate dehydratase small subunit (200 aa).

Belongs to the LeuD family. LeuD type 1 subfamily. In terms of assembly, heterodimer of LeuC and LeuD.

The catalysed reaction is (2R,3S)-3-isopropylmalate = (2S)-2-isopropylmalate. It participates in amino-acid biosynthesis; L-leucine biosynthesis; L-leucine from 3-methyl-2-oxobutanoate: step 2/4. Catalyzes the isomerization between 2-isopropylmalate and 3-isopropylmalate, via the formation of 2-isopropylmaleate. The protein is 3-isopropylmalate dehydratase small subunit of Aliivibrio fischeri (strain MJ11) (Vibrio fischeri).